The primary structure comprises 407 residues: Probable 2,3-bisphosphoglycerate-independent phosphoglycerate mutase (407 aa).

A disordered region spans residues 175-200 (GSDAINDTDPQQVGKEPLEPKGENPN).

This sequence belongs to the BPG-independent phosphoglycerate mutase family. A-PGAM subfamily.

The catalysed reaction is (2R)-2-phosphoglycerate = (2R)-3-phosphoglycerate. It participates in carbohydrate degradation; glycolysis; pyruvate from D-glyceraldehyde 3-phosphate: step 3/5. In terms of biological role, catalyzes the interconversion of 2-phosphoglycerate and 3-phosphoglycerate. This is Probable 2,3-bisphosphoglycerate-independent phosphoglycerate mutase from Aquifex aeolicus (strain VF5).